The following is a 594-amino-acid chain: Glomulin (594 aa).

Position 2 is an N-acetylalanine (Ala2). An alpha-helical region with structural similarity to HEAT repeats region spans residues Ala2 to Met553. Positions Ile300–Lys594 are important for interaction with RBX1.

In terms of assembly, interacts with FKBP4 and FKBP1A. Isoform 1: Interacts with RBX1 (via RING domain). Identified in complexes that contain RBX1 plus one of the cullins CUL1, CUL2, CUL3, and CUL4A. Identified in a SCF complex composed of CUL1, RBX1, SKP1, FBXW7 and GLMN. Component of a SCF-like complex consisting of CUL7, RBX1, SKP1, FBXW8 and GLMN. Interacts with unphosphorylated MET and is released upon MET phosphorylation. Phosphorylated on tyrosine residues. In terms of tissue distribution, ubiquitous.

Regulatory component of cullin-RING-based SCF (SKP1-Cullin-F-box protein) E3 ubiquitin-protein ligase complexes. Inhibits E3 ubiquitin ligase activity by binding to RBX1 (via RING domain) and inhibiting its interaction with the E2 ubiquitin-conjugating enzyme CDC34. Inhibits RBX1-mediated neddylation of CUL1. Required for normal stability and normal cellular levels of key components of SCF ubiquitin ligase complexes, including FBXW7, RBX1, CUL1, CUL2, CUL3, CUL4A, and thereby contributes to the regulation of CCNE1 and MYC levels. Essential for normal development of the vasculature. Contributes to the regulation of RPS6KB1 phosphorylation. The protein is Glomulin (GLMN) of Homo sapiens (Human).